The sequence spans 628 residues: DNA-directed RNA polymerase subunit beta' (628 aa).

Positions 70, 72, 85, and 88 each coordinate Zn(2+). The Mg(2+) site is built by Asp472, Asp474, and Asp476.

The protein belongs to the RNA polymerase beta' chain family. RpoC1 subfamily. As to quaternary structure, in plastids the minimal PEP RNA polymerase catalytic core is composed of four subunits: alpha, beta, beta', and beta''. When a (nuclear-encoded) sigma factor is associated with the core the holoenzyme is formed, which can initiate transcription. It depends on Mg(2+) as a cofactor. The cofactor is Zn(2+).

It localises to the plastid. It is found in the chloroplast. It carries out the reaction RNA(n) + a ribonucleoside 5'-triphosphate = RNA(n+1) + diphosphate. DNA-dependent RNA polymerase catalyzes the transcription of DNA into RNA using the four ribonucleoside triphosphates as substrates. This Gracilaria tenuistipitata var. liui (Red alga) protein is DNA-directed RNA polymerase subunit beta'.